Consider the following 116-residue polypeptide: Ribosome-binding factor A (116 aa).

The protein belongs to the RbfA family. Monomer. Binds 30S ribosomal subunits, but not 50S ribosomal subunits or 70S ribosomes.

It is found in the cytoplasm. One of several proteins that assist in the late maturation steps of the functional core of the 30S ribosomal subunit. Associates with free 30S ribosomal subunits (but not with 30S subunits that are part of 70S ribosomes or polysomes). Required for efficient processing of 16S rRNA. May interact with the 5'-terminal helix region of 16S rRNA. The sequence is that of Ribosome-binding factor A from Streptococcus agalactiae.